Consider the following 508-residue polypeptide: Photosystem II CP47 reaction center protein (508 aa).

Helical transmembrane passes span A21–S36, I101–W115, G140–F156, I203–S218, V237–V252, and S457–R472.

It belongs to the PsbB/PsbC family. PsbB subfamily. PSII is composed of 1 copy each of membrane proteins PsbA, PsbB, PsbC, PsbD, PsbE, PsbF, PsbH, PsbI, PsbJ, PsbK, PsbL, PsbM, PsbT, PsbX, PsbY, PsbZ, Psb30/Ycf12, at least 3 peripheral proteins of the oxygen-evolving complex and a large number of cofactors. It forms dimeric complexes. It depends on Binds multiple chlorophylls. PSII binds additional chlorophylls, carotenoids and specific lipids. as a cofactor.

The protein resides in the plastid. It localises to the chloroplast thylakoid membrane. In terms of biological role, one of the components of the core complex of photosystem II (PSII). It binds chlorophyll and helps catalyze the primary light-induced photochemical processes of PSII. PSII is a light-driven water:plastoquinone oxidoreductase, using light energy to abstract electrons from H(2)O, generating O(2) and a proton gradient subsequently used for ATP formation. This Ranunculus macranthus (Large buttercup) protein is Photosystem II CP47 reaction center protein.